Reading from the N-terminus, the 198-residue chain is Dual specificity protein phosphatase 13B (198 aa).

Residues 45–193 (HIDEVWPSLF…LQVLDNRLGR (149 aa)) enclose the Tyrosine-protein phosphatase domain. The active-site Phosphocysteine intermediate is the cysteine 138.

It belongs to the protein-tyrosine phosphatase family. Non-receptor class dual specificity subfamily. Highly expressed in the testis (at protein level). Also found in the skeletal muscle.

The catalysed reaction is O-phospho-L-tyrosyl-[protein] + H2O = L-tyrosyl-[protein] + phosphate. It catalyses the reaction O-phospho-L-seryl-[protein] + H2O = L-seryl-[protein] + phosphate. The enzyme catalyses O-phospho-L-threonyl-[protein] + H2O = L-threonyl-[protein] + phosphate. In terms of biological role, dual specificity phosphatase that dephosphorylates MAPK8/JNK and MAPK14/p38, but not MAPK1/ERK2, in vitro. Exhibits intrinsic phosphatase activity towards both phospho-seryl/threonyl and -tyrosyl residues, with similar specific activities in vitro. This Homo sapiens (Human) protein is Dual specificity protein phosphatase 13B.